Reading from the N-terminus, the 274-residue chain is 2-dehydro-3-deoxyphosphooctonate aldolase (274 aa).

Belongs to the KdsA family.

It is found in the cytoplasm. The enzyme catalyses D-arabinose 5-phosphate + phosphoenolpyruvate + H2O = 3-deoxy-alpha-D-manno-2-octulosonate-8-phosphate + phosphate. It functions in the pathway carbohydrate biosynthesis; 3-deoxy-D-manno-octulosonate biosynthesis; 3-deoxy-D-manno-octulosonate from D-ribulose 5-phosphate: step 2/3. Its pathway is bacterial outer membrane biogenesis; lipopolysaccharide biosynthesis. This is 2-dehydro-3-deoxyphosphooctonate aldolase from Rickettsia conorii (strain ATCC VR-613 / Malish 7).